Here is an 88-residue protein sequence, read N- to C-terminus: Bombyxin B-8 (88 aa).

Residues 1–18 form the signal peptide; it reads MKTSVIFVLIVLNLMWSG. Cystine bridges form between Cys-28–Cys-74, Cys-40–Cys-87, and Cys-73–Cys-78. Positions 47-65 are cleaved as a propeptide — c peptide like; sequence GGAQYAPYFWQKAYLGSRG.

This sequence belongs to the insulin family. As to quaternary structure, heterodimer of a B chain and an A chain linked by two disulfide bonds.

It localises to the secreted. Functionally, brain peptide responsible for activation of prothoracic glands to produce ecdysone in insects. This chain is Bombyxin B-8 (BBXB8), found in Bombyx mori (Silk moth).